The following is an 860-amino-acid chain: Alanine--tRNA ligase (860 aa).

The Zn(2+) site is built by His553, His557, Cys655, and His659.

The protein belongs to the class-II aminoacyl-tRNA synthetase family. It depends on Zn(2+) as a cofactor.

The protein localises to the cytoplasm. The enzyme catalyses tRNA(Ala) + L-alanine + ATP = L-alanyl-tRNA(Ala) + AMP + diphosphate. Functionally, catalyzes the attachment of alanine to tRNA(Ala) in a two-step reaction: alanine is first activated by ATP to form Ala-AMP and then transferred to the acceptor end of tRNA(Ala). Also edits incorrectly charged Ser-tRNA(Ala) and Gly-tRNA(Ala) via its editing domain. In Legionella pneumophila (strain Lens), this protein is Alanine--tRNA ligase.